The chain runs to 69 residues: Large ribosomal subunit protein bL31 (69 aa).

Positions 16, 18, 38, and 41 each coordinate Zn(2+).

This sequence belongs to the bacterial ribosomal protein bL31 family. Type A subfamily. In terms of assembly, part of the 50S ribosomal subunit. It depends on Zn(2+) as a cofactor.

In terms of biological role, binds the 23S rRNA. This Thermobifida fusca (strain YX) protein is Large ribosomal subunit protein bL31.